We begin with the raw amino-acid sequence, 247 residues long: SPX domain-containing protein 5 (247 aa).

The 139-residue stretch at 1 to 139 folds into the SPX domain; it reads MKFGKRLKRQ…GGVLRLPVIA (139 aa). Positions 224–247 are disordered; that stretch reads SDWLIQSVQPPPPPPPSSPLIIPT. The span at 232–241 shows a compositional bias: pro residues; that stretch reads QPPPPPPPSS.

The sequence is that of SPX domain-containing protein 5 (SPX5) from Oryza sativa subsp. indica (Rice).